The following is a 1564-amino-acid chain: Abnormal spindle-like microcephaly-associated protein homolog (1564 aa).

31 consecutive IQ domains span residues 31-60 (YLWATVTIQRHWRAYLRRKQDQQRYEMLKS), 220-251 (LKKNIIKLQAHVRKHQQLQKYKKIKKAAVIIQ), 270-299 (TRSAVIVLQSAYRGMQARKMYIHILTSVIK), 293-322 (ILTSVIKIQSYYRAYVSKKEFLSLKNATIK), 366-395 (MRESCIKLQAFVRGYLVRKQIRLQRKAVIS), 389-420 (QRKAVISLQSYFRMRKARQYYLKMYKAVIIIQ), 439-468 (VKKAATCLQAAYRGYKVRQLIKQQSVAAVK), 462-491 (QSVAAVKIQSAFRGYSKRVKYLSVLQSIIK), 512-541 (AKAAVISLQSAYRGWKVRKQIRREHQAAMK), 535-566 (EHQAAMKIQSAFRMAKAQKQFRLFKTAALVIQ), 608-639 (QHTCAVIIQSYYRMHVQQKKWKIMKEAALLIQ), 658-687 (TKAAVLTLQSAYRGMKVRKRIKACNTAAIT), 681-712 (CNTAAITIQSKYRAYKTKKKYAAYRASAIIIQ), 731-762 (LKKTAIKIQAVYRGIRVRRHIQHMHRAATFIK), 754-785 (MHRAATFIKAMFKMHQPRIRYHTMRKATIVIQ), 804-835 (ILKAVNILQANFRGVRVRRTLRKLRIAATLIQ), 827-856 (LRIAATLIQSNYRRYRQQTYFNKLKKITRT), 877-908 (LRHSVIYIQALFRGMKARRHLKTMHIAATLIQ), 900-931 (MHIAATLIQRRFRALMLRRRFLSLKKTAIWIQ), 949-980 (LQNAAIKIQSSYRRWMIRKKMREMHRAAAFIQ), 972-1003 (MHRAAAFIQATFRMHRVHMRYHALKQASVVIQ), 1022-1053 (QRYSAVILQAAFRGMKTRRHLKSMYFSAILIQ), 1045-1076 (MYFSAILIQSRFRSLLVRRRFISLKKAAIFIQ), 1095-1126 (LRKAAITIQSSYRRLMVKKKLQEMHRAAVLIQ), 1168-1199 (QWHSAVIIQAAYRGMKARQLLREKHKAAIIIQ), 1304-1333 (HTQAVICIQSYYRGFKVRRDIQNMHLAATR), 1327-1358 (MHLAATRIQSFYRMHRAKVHYQTKKTAIVIIQ), 1377-1406 (VQKSVRTIQAAFRGMKVRQKLKNIPKEKMA), 1452-1483 (QSRAAVTIQKAFRRMITRKLETQKCATLRIQS), 1474-1503 (QKCATLRIQSFLRMAVYRRRRANSVQQKRA), and 1500-1531 (QKRAAVTLQHYFRMWQTRKQFLLYRKAAVVLQ).

It is found in the cytoplasm. It localises to the nucleus. Functionally, probable role in mitotic spindle regulation and coordination of mitotic processes. May have a preferential role in regulating neurogenesis. The protein is Abnormal spindle-like microcephaly-associated protein homolog (ASPM) of Ateles geoffroyi (Black-handed spider monkey).